A 233-amino-acid chain; its full sequence is Fibrillarin-like rRNA/tRNA 2'-O-methyltransferase (233 aa).

S-adenosyl-L-methionine contacts are provided by residues 90–91 (TT), 109–110 (EF), 134–135 (DA), and 154–157 (DVAQ).

This sequence belongs to the methyltransferase superfamily. Fibrillarin family. As to quaternary structure, interacts with nop5. Component of box C/D small ribonucleoprotein (sRNP) particles that contain rpl7ae, FlpA and nop5, plus a guide RNA.

In terms of biological role, involved in pre-rRNA and tRNA processing. Utilizes the methyl donor S-adenosyl-L-methionine to catalyze the site-specific 2'-hydroxyl methylation of ribose moieties in rRNA and tRNA. Site specificity is provided by a guide RNA that base pairs with the substrate. Methylation occurs at a characteristic distance from the sequence involved in base pairing with the guide RNA. This chain is Fibrillarin-like rRNA/tRNA 2'-O-methyltransferase, found in Aeropyrum pernix (strain ATCC 700893 / DSM 11879 / JCM 9820 / NBRC 100138 / K1).